A 30-amino-acid polypeptide reads, in one-letter code: Thylakoid lumenal 13.3 kDa protein (30 aa).

The protein resides in the plastid. Its subcellular location is the chloroplast thylakoid lumen. In Spinacia oleracea (Spinach), this protein is Thylakoid lumenal 13.3 kDa protein.